A 106-amino-acid polypeptide reads, in one-letter code: Phosphoribosyl-ATP pyrophosphatase (106 aa).

It belongs to the PRA-PH family.

It localises to the cytoplasm. It catalyses the reaction 1-(5-phospho-beta-D-ribosyl)-ATP + H2O = 1-(5-phospho-beta-D-ribosyl)-5'-AMP + diphosphate + H(+). It functions in the pathway amino-acid biosynthesis; L-histidine biosynthesis; L-histidine from 5-phospho-alpha-D-ribose 1-diphosphate: step 2/9. The sequence is that of Phosphoribosyl-ATP pyrophosphatase from Methylobacillus flagellatus (strain ATCC 51484 / DSM 6875 / VKM B-1610 / KT).